A 148-amino-acid polypeptide reads, in one-letter code: Low molecular weight protein-tyrosine-phosphatase Etp (148 aa).

Cys13 (nucleophile) is an active-site residue. The active site involves Arg19. The Proton donor role is filled by Asp119.

The protein belongs to the low molecular weight phosphotyrosine protein phosphatase family.

The enzyme catalyses O-phospho-L-tyrosyl-[protein] + H2O = L-tyrosyl-[protein] + phosphate. Its function is as follows. Dephosphorylates etk. The protein is Low molecular weight protein-tyrosine-phosphatase Etp (etp) of Escherichia coli O157:H7.